The following is a 422-amino-acid chain: Hexuronate transporter (422 aa).

The next 11 membrane-spanning stretches (helical) occupy residues 9-29, 45-65, 82-102, 141-161, 163-183, 219-239, 256-276, 294-314, 321-341, 356-376, and 381-401; these read VILFLFLAGVINYLDRSALSI, MGLIFSSFSIGYAIFNFLGGV, VWSLFSGAVALAFGFVSLLII, TPLGGAISGPIVGMIAVAFSW, VSFVLIMIIGLIWAVLWFKFV, LFTAFAFFAYNYILFFFLTWF, VITVIPWILGFIGLAAGGFVS, VVLVTCLFSSAVLIGFAGLVA, TLVALSVFFLYLTGAIYWAVI, FMHFLANTAGIIGPALTGFIV, and TFSGAFLLAGGLAVFASLAVI.

It belongs to the major facilitator superfamily. Phthalate permease family.

It is found in the cell membrane. The catalysed reaction is aldehydo-D-glucuronate(in) + H(+)(in) = aldehydo-D-glucuronate(out) + H(+)(out). It catalyses the reaction aldehydo-D-galacturonate(out) + H(+)(out) = aldehydo-D-galacturonate(in) + H(+)(in). In terms of biological role, transport of aldohexuronates such as D-glucuronate and D-galacturonate. This is Hexuronate transporter from Bacillus subtilis (strain 168).